The primary structure comprises 341 residues: Probable dual-specificity RNA methyltransferase RlmN (341 aa).

Glu-88 serves as the catalytic Proton acceptor. A Radical SAM core domain is found at 94-314 (EGDRATLCIS…ESHGFTCTIR (221 aa)). Cysteines 101 and 325 form a disulfide. [4Fe-4S] cluster contacts are provided by Cys-108, Cys-112, and Cys-115. Residues 153–154 (GE), Ser-185, 206–208 (SLH), and His-282 each bind S-adenosyl-L-methionine. Catalysis depends on Cys-325, which acts as the S-methylcysteine intermediate.

Belongs to the radical SAM superfamily. RlmN family. Requires [4Fe-4S] cluster as cofactor.

It localises to the cytoplasm. It carries out the reaction adenosine(2503) in 23S rRNA + 2 reduced [2Fe-2S]-[ferredoxin] + 2 S-adenosyl-L-methionine = 2-methyladenosine(2503) in 23S rRNA + 5'-deoxyadenosine + L-methionine + 2 oxidized [2Fe-2S]-[ferredoxin] + S-adenosyl-L-homocysteine. It catalyses the reaction adenosine(37) in tRNA + 2 reduced [2Fe-2S]-[ferredoxin] + 2 S-adenosyl-L-methionine = 2-methyladenosine(37) in tRNA + 5'-deoxyadenosine + L-methionine + 2 oxidized [2Fe-2S]-[ferredoxin] + S-adenosyl-L-homocysteine. Functionally, specifically methylates position 2 of adenine 2503 in 23S rRNA and position 2 of adenine 37 in tRNAs. This chain is Probable dual-specificity RNA methyltransferase RlmN, found in Porphyromonas gingivalis (strain ATCC BAA-308 / W83).